A 354-amino-acid polypeptide reads, in one-letter code: S-adenosylmethionine-dependent nucleotide dehydratase RSAD2 (354 aa).

The Radical SAM core domain maps to 62 to 282 (AMTPTSVNYH…LDRHSSISCL (221 aa)). Positions 76, 80, and 83 each coordinate [4Fe-4S] cluster.

The protein belongs to the radical SAM superfamily. RSAD2 family. [4Fe-4S] cluster serves as cofactor. In terms of tissue distribution, constitutively expressed in spleen, head kidney and trunk kidney. Following viral infection, detected in most organs including liver, gill, intestine, heart, muscle and brain.

The protein resides in the endoplasmic reticulum membrane. Interferon-inducible iron-sulfur (4FE-4S) cluster-binding antiviral protein which plays a major role in the cell antiviral state induced by type I and type II interferon. This Siniperca chuatsi (Mandarin fish) protein is S-adenosylmethionine-dependent nucleotide dehydratase RSAD2.